The primary structure comprises 274 residues: Bis(5'-nucleosyl)-tetraphosphatase, symmetrical (274 aa).

Belongs to the Ap4A hydrolase family.

It carries out the reaction P(1),P(4)-bis(5'-adenosyl) tetraphosphate + H2O = 2 ADP + 2 H(+). In terms of biological role, hydrolyzes diadenosine 5',5'''-P1,P4-tetraphosphate to yield ADP. This chain is Bis(5'-nucleosyl)-tetraphosphatase, symmetrical, found in Shewanella oneidensis (strain ATCC 700550 / JCM 31522 / CIP 106686 / LMG 19005 / NCIMB 14063 / MR-1).